The following is a 363-amino-acid chain: MSGNTYGKLFTVTTAGESHGPALVAIVDGCPPGLEISLADLQHDLDRRKPGTSRHTTQRQEPDEVEILSGVFEGRTTGCSIGLLIRNTDQKSKDYSAIKDLFRPAHADYTYHHKYGLRDYRGGGRSSARETAMRVAAGAIAKKFLATQGIRVRGYMSQLGPIEIPFKTWDSVEQNAFFSPDPDKVPELEAYMDQLRRDQDSVGAKITVVAEGVMPGLGEPIFDRLDAELAHALMSINAVKGVEIGAGFASVAQRGTEHRDELTPEGFLSNNAGGILGGISSGQPIVAHLALKPTSSITTPGRSIDVDGNPVEVITKGRHDPCVGIRATPIAEAMMAIVLMDHLLRHRAQNAEVKVGTPVLGQL.

Residues arginine 48 and arginine 54 each coordinate NADP(+). FMN-binding positions include 125–127 (RSS), 237–238 (NA), glycine 277, 292–296 (KPTSS), and arginine 318.

It belongs to the chorismate synthase family. In terms of assembly, homotetramer. Requires FMNH2 as cofactor.

It carries out the reaction 5-O-(1-carboxyvinyl)-3-phosphoshikimate = chorismate + phosphate. It functions in the pathway metabolic intermediate biosynthesis; chorismate biosynthesis; chorismate from D-erythrose 4-phosphate and phosphoenolpyruvate: step 7/7. Its function is as follows. Catalyzes the anti-1,4-elimination of the C-3 phosphate and the C-6 proR hydrogen from 5-enolpyruvylshikimate-3-phosphate (EPSP) to yield chorismate, which is the branch point compound that serves as the starting substrate for the three terminal pathways of aromatic amino acid biosynthesis. This reaction introduces a second double bond into the aromatic ring system. This is Chorismate synthase from Pseudomonas entomophila (strain L48).